The primary structure comprises 191 residues: Protein Ves (191 aa).

It belongs to the Ves family.

In Shigella flexneri serotype 5b (strain 8401), this protein is Protein Ves.